The sequence spans 349 residues: Dihydroorotate dehydrogenase (quinone) (349 aa).

FMN contacts are provided by residues 67–71 (AGLDK) and T91. Residue K71 coordinates substrate. 116–120 (NRLGF) contacts substrate. Positions 147 and 180 each coordinate FMN. N180 lines the substrate pocket. Catalysis depends on S183, which acts as the Nucleophile. N185 serves as a coordination point for substrate. FMN contacts are provided by K225 and T253. Residue 254-255 (NT) coordinates substrate. FMN contacts are provided by residues G276, G305, and 326-327 (YT).

This sequence belongs to the dihydroorotate dehydrogenase family. Type 2 subfamily. Monomer. The cofactor is FMN.

Its subcellular location is the cell membrane. The catalysed reaction is (S)-dihydroorotate + a quinone = orotate + a quinol. It participates in pyrimidine metabolism; UMP biosynthesis via de novo pathway; orotate from (S)-dihydroorotate (quinone route): step 1/1. Functionally, catalyzes the conversion of dihydroorotate to orotate with quinone as electron acceptor. This chain is Dihydroorotate dehydrogenase (quinone), found in Bordetella parapertussis (strain 12822 / ATCC BAA-587 / NCTC 13253).